The primary structure comprises 473 residues: Bifunctional protein HldE (473 aa).

The ribokinase stretch occupies residues 1–317 (MKLSMPRFDQ…RRAIQREEGS (317 aa)). Position 194-197 (194-197 (NLSE)) interacts with ATP. Asp-263 is an active-site residue. The segment at 343–473 (FTNGCFDILH…TAIVEKIRKN (131 aa)) is cytidylyltransferase.

The protein in the N-terminal section; belongs to the carbohydrate kinase PfkB family. It in the C-terminal section; belongs to the cytidylyltransferase family. As to quaternary structure, homodimer.

The enzyme catalyses D-glycero-beta-D-manno-heptose 7-phosphate + ATP = D-glycero-beta-D-manno-heptose 1,7-bisphosphate + ADP + H(+). The catalysed reaction is D-glycero-beta-D-manno-heptose 1-phosphate + ATP + H(+) = ADP-D-glycero-beta-D-manno-heptose + diphosphate. Its pathway is nucleotide-sugar biosynthesis; ADP-L-glycero-beta-D-manno-heptose biosynthesis; ADP-L-glycero-beta-D-manno-heptose from D-glycero-beta-D-manno-heptose 7-phosphate: step 1/4. The protein operates within nucleotide-sugar biosynthesis; ADP-L-glycero-beta-D-manno-heptose biosynthesis; ADP-L-glycero-beta-D-manno-heptose from D-glycero-beta-D-manno-heptose 7-phosphate: step 3/4. Its function is as follows. Catalyzes the phosphorylation of D-glycero-D-manno-heptose 7-phosphate at the C-1 position to selectively form D-glycero-beta-D-manno-heptose-1,7-bisphosphate. Functionally, catalyzes the ADP transfer from ATP to D-glycero-beta-D-manno-heptose 1-phosphate, yielding ADP-D-glycero-beta-D-manno-heptose. This is Bifunctional protein HldE from Pseudomonas putida (strain W619).